Consider the following 545-residue polypeptide: Phenylalanine--tRNA ligase beta subunit (545 aa).

Residues 268 to 343 (FLHKIQNVRE…MSIGYNNLEP (76 aa)) form the B5 domain. Residues Asp-321, Asp-327, Glu-330, and Asp-331 each coordinate Mg(2+).

It belongs to the phenylalanyl-tRNA synthetase beta subunit family. Type 2 subfamily. Tetramer of two alpha and two beta subunits. Requires Mg(2+) as cofactor.

Its subcellular location is the cytoplasm. It carries out the reaction tRNA(Phe) + L-phenylalanine + ATP = L-phenylalanyl-tRNA(Phe) + AMP + diphosphate + H(+). The protein is Phenylalanine--tRNA ligase beta subunit of Saccharolobus islandicus (strain Y.N.15.51 / Yellowstone #2) (Sulfolobus islandicus).